A 489-amino-acid polypeptide reads, in one-letter code: Metal cation symporter ZIP14 (489 aa).

The first 28 residues, 1 to 28 (MKRLHPALPSCLLLVLFGIWRTAPQTHA), serve as a signal peptide directing secretion. Residues 29–155 (SSAGLPPLSA…PSAIEVWGYG (127 aa)) lie on the Extracellular side of the membrane. 4 N-linked (GlcNAc...) asparagine glycosylation sites follow: Asn-52, Asn-75, Asn-85, and Asn-100. The helical transmembrane segment at 156–176 (FLCVTVISLCSLMGASVVPFM) threads the bilayer. Over 177–184 (KKTFYKRL) the chain is Cytoplasmic. The chain crosses the membrane as a helical span at residues 185 to 205 (LLYFIALAIGTLYSNALFQLI). At 206-221 (PEAFGFNPQDNYVSKS) the chain is on the extracellular side. The helical transmembrane segment at 222 to 242 (AVVFGGFYLFFFTEKILKMLL) threads the bilayer. Over 243 to 349 (KQKNEHHHGH…SDGLHNFIDG (107 aa)) the chain is Cytoplasmic. The HHHGHXHX-motif motif lies at 248–255 (HHHGHNHF). Residues 350-370 (LAIGASFTVSVFQGISTSVAI) form a helical membrane-spanning segment. Residues 371-394 (LCEEFPHELGDFVILLNAGMSIQQ) are Extracellular-facing. Residues 373 to 378 (EEFPHE) carry the XEXPHE-motif motif. The chain crosses the membrane as a helical span at residues 395-415 (ALFFNFLSACCCYLGLAFGIL). Residues 416-421 (AGSHFS) are Cytoplasmic-facing. A helical membrane pass occupies residues 422-442 (ANWIFALAGGMFLYIALADMF). Residues 443–457 (PEMNEVCQEDEKNDS) are Extracellular-facing. A helical transmembrane segment spans residues 458–478 (FLVPFVIQNLGLLTGFSIMLV). Residues 479 to 489 (LTMYSGQIQIG) are Cytoplasmic-facing.

Belongs to the ZIP transporter (TC 2.A.5) family. As to quaternary structure, homotrimer. In terms of processing, ubiquitinated. Ubiquitination occurs upon iron depletion. The ubiquitinated form undergoes proteasomal degradation. Post-translationally, N-glycosylated. N-glycosylation at Asn-100 is required for iron-regulated extraction of the transporter from membranes and subsequent proteasomal degradation. Widely expressed. Highly and transiently expressed during the early stage of adipocyte differentiation. Strongly expressed in liver, preadipocyte, duodenum and jejunum, moderately in brain, heart, skeletal muscle, spleen, pancreas, kidney and white adipose cells. Expression is almost undetectable in lung, testis and brown adipose cells. Expressed by chondrocytes and pituitary cells. In terms of tissue distribution, more strongly expressed in brain. As to expression, more strongly expressed in liver, kidney and duodenum.

The protein resides in the cell membrane. It is found in the apical cell membrane. It localises to the basolateral cell membrane. Its subcellular location is the early endosome membrane. The protein localises to the late endosome membrane. The protein resides in the lysosome membrane. The enzyme catalyses Zn(2+)(out) + 2 hydrogencarbonate(out) = Zn(2+)(in) + 2 hydrogencarbonate(in). The catalysed reaction is Mn(2+)(out) + 2 hydrogencarbonate(out) = Mn(2+)(in) + 2 hydrogencarbonate(in). It catalyses the reaction Fe(2+)(out) + 2 hydrogencarbonate(out) = Fe(2+)(in) + 2 hydrogencarbonate(in). It carries out the reaction Cd(2+)(out) + 2 hydrogencarbonate(out) = Cd(2+)(in) + 2 hydrogencarbonate(in). With respect to regulation, inhibited by cyanide and therefore dependent of an energy source. Inhibited by DIDS/4,4'-diisothiocyanatostilbene-2,2'-disulfonic acid, an inhibitor hydrogencarbonate-dependent transporters. In terms of biological role, electroneutral transporter of the plasma membrane mediating the cellular uptake of the divalent metal cations zinc, manganese and iron that are important for tissue homeostasis, metabolism, development and immunity. Functions as an energy-dependent symporter, transporting through the membranes an electroneutral complex composed of a divalent metal cation and two bicarbonate anions. Beside these endogenous cellular substrates, can also import cadmium a non-essential metal which is cytotoxic and carcinogenic. Controls the cellular uptake by the intestinal epithelium of systemic zinc, which is in turn required to maintain tight junctions and the intestinal permeability. Modifies the activity of zinc-dependent phosphodiesterases, thereby indirectly regulating G protein-coupled receptor signaling pathways important for gluconeogenesis and chondrocyte differentiation. Regulates insulin receptor signaling, glucose uptake, glycogen synthesis and gluconeogenesis in hepatocytes through the zinc-dependent intracellular catabolism of insulin. Through zinc cellular uptake also plays a role in the adaptation of cells to endoplasmic reticulum stress. Major manganese transporter of the basolateral membrane of intestinal epithelial cells, it plays a central role in manganese systemic homeostasis through intestinal manganese uptake. Also involved in manganese extracellular uptake by cells of the blood-brain barrier. May also play a role in manganese and zinc homeostasis participating in their elimination from the blood through the hepatobiliary excretion. Also functions in the extracellular uptake of free iron. May also function intracellularly and mediate the transport from endosomes to cytosol of iron endocytosed by transferrin. Plays a role in innate immunity by regulating the expression of cytokines by activated macrophages. This chain is Metal cation symporter ZIP14, found in Mus musculus (Mouse).